Consider the following 129-residue polypeptide: Large ribosomal subunit protein uL22 (129 aa).

This sequence belongs to the universal ribosomal protein uL22 family. Part of the 50S ribosomal subunit.

This protein binds specifically to 23S rRNA; its binding is stimulated by other ribosomal proteins, e.g. L4, L17, and L20. It is important during the early stages of 50S assembly. It makes multiple contacts with different domains of the 23S rRNA in the assembled 50S subunit and ribosome. Functionally, the globular domain of the protein is located near the polypeptide exit tunnel on the outside of the subunit, while an extended beta-hairpin is found that lines the wall of the exit tunnel in the center of the 70S ribosome. This is Large ribosomal subunit protein uL22 from Mesorhizobium japonicum (strain LMG 29417 / CECT 9101 / MAFF 303099) (Mesorhizobium loti (strain MAFF 303099)).